We begin with the raw amino-acid sequence, 98 residues long: NADH-ubiquinone oxidoreductase chain 4L (98 aa).

A run of 3 helical transmembrane segments spans residues 1–21, 27–47, and 61–81; these read MYSS…VNLI, FLMT…FVPI, and VILL…MVLM.

It belongs to the complex I subunit 4L family.

It localises to the mitochondrion membrane. It catalyses the reaction a ubiquinone + NADH + 5 H(+)(in) = a ubiquinol + NAD(+) + 4 H(+)(out). In terms of biological role, core subunit of the mitochondrial membrane respiratory chain NADH dehydrogenase (Complex I) that is believed to belong to the minimal assembly required for catalysis. Complex I functions in the transfer of electrons from NADH to the respiratory chain. The immediate electron acceptor for the enzyme is believed to be ubiquinone. The chain is NADH-ubiquinone oxidoreductase chain 4L (ND4L) from Lumbricus terrestris (Common earthworm).